A 561-amino-acid polypeptide reads, in one-letter code: Dihydroxy-acid dehydratase (561 aa).

C50 lines the [2Fe-2S] cluster pocket. D82 contributes to the Mg(2+) binding site. C123 contributes to the [2Fe-2S] cluster binding site. D124 and K125 together coordinate Mg(2+). K125 carries the post-translational modification N6-carboxylysine. A [2Fe-2S] cluster-binding site is contributed by C195. Residue E447 coordinates Mg(2+). S473 acts as the Proton acceptor in catalysis.

The protein belongs to the IlvD/Edd family. In terms of assembly, homodimer. The cofactor is [2Fe-2S] cluster. Mg(2+) serves as cofactor.

It catalyses the reaction (2R)-2,3-dihydroxy-3-methylbutanoate = 3-methyl-2-oxobutanoate + H2O. It carries out the reaction (2R,3R)-2,3-dihydroxy-3-methylpentanoate = (S)-3-methyl-2-oxopentanoate + H2O. The protein operates within amino-acid biosynthesis; L-isoleucine biosynthesis; L-isoleucine from 2-oxobutanoate: step 3/4. Its pathway is amino-acid biosynthesis; L-valine biosynthesis; L-valine from pyruvate: step 3/4. In terms of biological role, functions in the biosynthesis of branched-chain amino acids. Catalyzes the dehydration of (2R,3R)-2,3-dihydroxy-3-methylpentanoate (2,3-dihydroxy-3-methylvalerate) into 2-oxo-3-methylpentanoate (2-oxo-3-methylvalerate) and of (2R)-2,3-dihydroxy-3-methylbutanoate (2,3-dihydroxyisovalerate) into 2-oxo-3-methylbutanoate (2-oxoisovalerate), the penultimate precursor to L-isoleucine and L-valine, respectively. The protein is Dihydroxy-acid dehydratase of Rippkaea orientalis (strain PCC 8801 / RF-1) (Cyanothece sp. (strain PCC 8801)).